A 353-amino-acid chain; its full sequence is Photosystem II D2 protein (353 aa).

N-acetylthreonine is present on Thr2. Phosphothreonine is present on Thr2. The chain crosses the membrane as a helical span at residues 41-61; that stretch reads CAYFALGGWFTGTTFVTSWYT. Residue His118 coordinates chlorophyll a. Residues 125–141 form a helical membrane-spanning segment; it reads GFMLRQFELARSVQLRP. Pheophytin a is bound by residues Gln130 and Asn143. Residues 153–166 traverse the membrane as a helical segment; the sequence is VFVSVFLIYPLGQS. Residue His198 participates in chlorophyll a binding. Residues 208–228 traverse the membrane as a helical segment; the sequence is AALLCAIHGATVENTLFEDGD. Positions 215 and 262 each coordinate a plastoquinone. His215 serves as a coordination point for Fe cation. Residue His269 coordinates Fe cation. A helical membrane pass occupies residues 279–295; sequence GLWMSAIGVVGLALNLR.

It belongs to the reaction center PufL/M/PsbA/D family. In terms of assembly, PSII is composed of 1 copy each of membrane proteins PsbA, PsbB, PsbC, PsbD, PsbE, PsbF, PsbH, PsbI, PsbJ, PsbK, PsbL, PsbM, PsbT, PsbX, PsbY, PsbZ, Psb30/Ycf12, at least 3 peripheral proteins of the oxygen-evolving complex and a large number of cofactors. It forms dimeric complexes. The D1/D2 heterodimer binds P680, chlorophylls that are the primary electron donor of PSII, and subsequent electron acceptors. It shares a non-heme iron and each subunit binds pheophytin, quinone, additional chlorophylls, carotenoids and lipids. There is also a Cl(-1) ion associated with D1 and D2, which is required for oxygen evolution. The PSII complex binds additional chlorophylls, carotenoids and specific lipids. is required as a cofactor.

Its subcellular location is the plastid. The protein resides in the chloroplast thylakoid membrane. It catalyses the reaction 2 a plastoquinone + 4 hnu + 2 H2O = 2 a plastoquinol + O2. Photosystem II (PSII) is a light-driven water:plastoquinone oxidoreductase that uses light energy to abstract electrons from H(2)O, generating O(2) and a proton gradient subsequently used for ATP formation. It consists of a core antenna complex that captures photons, and an electron transfer chain that converts photonic excitation into a charge separation. The D1/D2 (PsbA/PsbD) reaction center heterodimer binds P680, the primary electron donor of PSII as well as several subsequent electron acceptors. D2 is needed for assembly of a stable PSII complex. This Liriodendron tulipifera (Tuliptree) protein is Photosystem II D2 protein.